We begin with the raw amino-acid sequence, 212 residues long: Cytochrome c biogenesis ATP-binding export protein CcmA (212 aa).

An ABC transporter domain is found at 8 to 212 (LQATALACER…RSIDLAKGSA (205 aa)). 40 to 47 (GPNGSGKT) lines the ATP pocket.

This sequence belongs to the ABC transporter superfamily. CcmA exporter (TC 3.A.1.107) family. In terms of assembly, the complex is composed of two ATP-binding proteins (CcmA) and two transmembrane proteins (CcmB).

The protein resides in the cell inner membrane. The catalysed reaction is heme b(in) + ATP + H2O = heme b(out) + ADP + phosphate + H(+). Functionally, part of the ABC transporter complex CcmAB involved in the biogenesis of c-type cytochromes; once thought to export heme, this seems not to be the case, but its exact role is uncertain. Responsible for energy coupling to the transport system. The sequence is that of Cytochrome c biogenesis ATP-binding export protein CcmA from Pseudomonas syringae pv. tomato (strain ATCC BAA-871 / DC3000).